A 309-amino-acid polypeptide reads, in one-letter code: MTTKKADYIWFNGEMVRWEDAKVHVMSHALHYGTSVFEGIRCYDSHKGPVVFRHREHMQRLHDSAKIYRFPVSQSIDELMEACRDVIRKNNLTSAYIRPLIFVGDVGMGVNPPAGYSTDVIIAAFPWGAYLGAEALEQGIDAMVSSWNRAAPNTIPTAAKAGGNYLSSLLVGSEARRHGYQEGIALDVNGYISEGAGENLFEVKDGVLFTPPFTSSALPGITRDAIIKLAKELGIEVREQVLSRESLYLADEVFMSGTAAEITPVRSVDGIQVGEGRCGPVTKRIQQAFFGLFTGETEDKWGWLDQVNQ.

An N6-(pyridoxal phosphate)lysine modification is found at lysine 160.

Belongs to the class-IV pyridoxal-phosphate-dependent aminotransferase family. Homohexamer. It depends on pyridoxal 5'-phosphate as a cofactor.

The catalysed reaction is L-leucine + 2-oxoglutarate = 4-methyl-2-oxopentanoate + L-glutamate. It catalyses the reaction L-isoleucine + 2-oxoglutarate = (S)-3-methyl-2-oxopentanoate + L-glutamate. The enzyme catalyses L-valine + 2-oxoglutarate = 3-methyl-2-oxobutanoate + L-glutamate. It functions in the pathway amino-acid biosynthesis; L-isoleucine biosynthesis; L-isoleucine from 2-oxobutanoate: step 4/4. The protein operates within amino-acid biosynthesis; L-leucine biosynthesis; L-leucine from 3-methyl-2-oxobutanoate: step 4/4. Its pathway is amino-acid biosynthesis; L-valine biosynthesis; L-valine from pyruvate: step 4/4. In terms of biological role, acts on leucine, isoleucine and valine. In Escherichia coli O157:H7, this protein is Branched-chain-amino-acid aminotransferase (ilvE).